The sequence spans 264 residues: Taurine import ATP-binding protein TauB (264 aa).

The 230-residue stretch at 4–233 (LQLERISAQY…RYAAGESARA (230 aa)) folds into the ABC transporter domain. 38-45 (GPSGSGKT) contacts ATP.

This sequence belongs to the ABC transporter superfamily. Taurine importer (TC 3.A.1.17.1) family. The complex is composed of two ATP-binding proteins (TauB), two transmembrane proteins (TauC) and a solute-binding protein (TauA).

It is found in the cell inner membrane. The catalysed reaction is taurine(out) + ATP + H2O = taurine(in) + ADP + phosphate + H(+). Its function is as follows. Part of the ABC transporter complex TauABC involved in taurine import. Responsible for energy coupling to the transport system. This chain is Taurine import ATP-binding protein TauB, found in Pseudomonas fluorescens (strain ATCC BAA-477 / NRRL B-23932 / Pf-5).